A 594-amino-acid polypeptide reads, in one-letter code: Elongation factor 4 (594 aa).

In terms of domain architecture, tr-type G spans 2–184 (KNIRNFSIIA…TIVAKVPAPE (183 aa)). Residues 14-19 (DHGKST) and 131-134 (NKID) contribute to the GTP site.

This sequence belongs to the TRAFAC class translation factor GTPase superfamily. Classic translation factor GTPase family. LepA subfamily.

The protein resides in the cell inner membrane. It carries out the reaction GTP + H2O = GDP + phosphate + H(+). Its function is as follows. Required for accurate and efficient protein synthesis under certain stress conditions. May act as a fidelity factor of the translation reaction, by catalyzing a one-codon backward translocation of tRNAs on improperly translocated ribosomes. Back-translocation proceeds from a post-translocation (POST) complex to a pre-translocation (PRE) complex, thus giving elongation factor G a second chance to translocate the tRNAs correctly. Binds to ribosomes in a GTP-dependent manner. In Francisella tularensis subsp. tularensis (strain WY96-3418), this protein is Elongation factor 4.